The sequence spans 210 residues: MVDCIVKNWQGEEVGNASLTLRVAKEENAAHIVHRALVRQQNNARQGNASAKTRAEVRGGGRKPWKQKGTGRARAGSIRSPLWRGGGVIFGPKPRDYSQKMNRKERRLALRTAIASRADNMVVVEAFGDQFSQPKTKELATALTRWGAKPEKRVLLILDEIPENVFLSGRNIPYLKILRADNLNIYDVLVADTIVATATALEKIQEVYGE.

Positions 41 to 51 (QNNARQGNASA) are enriched in polar residues. A disordered region spans residues 41–77 (QNNARQGNASAKTRAEVRGGGRKPWKQKGTGRARAGS). A compositionally biased stretch (basic residues) spans 60–71 (GGRKPWKQKGTG).

It belongs to the universal ribosomal protein uL4 family. In terms of assembly, part of the 50S ribosomal subunit.

In terms of biological role, one of the primary rRNA binding proteins, this protein initially binds near the 5'-end of the 23S rRNA. It is important during the early stages of 50S assembly. It makes multiple contacts with different domains of the 23S rRNA in the assembled 50S subunit and ribosome. Its function is as follows. Forms part of the polypeptide exit tunnel. This chain is Large ribosomal subunit protein uL4, found in Synechocystis sp. (strain ATCC 27184 / PCC 6803 / Kazusa).